The following is a 169-amino-acid chain: Ribosome maturation factor RimP (169 aa).

It belongs to the RimP family.

The protein localises to the cytoplasm. Its function is as follows. Required for maturation of 30S ribosomal subunits. The polypeptide is Ribosome maturation factor RimP (Pseudomonas putida (strain W619)).